The primary structure comprises 122 residues: Vitelline membrane protein 15a-3 (122 aa).

The N-terminal stretch at 1–17 (MNKFIILALFAVAAASA) is a signal peptide. Residues 21–49 (YPPPPPKPYHAPPPPPHHAHPPPPPPPPA) show a composition bias toward pro residues. Disordered regions lie at residues 21-63 (YPPP…APVV) and 103-122 (PAPAPHYRAPESDSFDQFEE). The VM domain occupies 69–109 (HAPHAKCGANLLVGCAPSVAHAPCVPLHGHGHGYPAPAPHY).

It belongs to the vitelline membrane protein family. Expressed in the middle and posterior regions of the follicle cells.

It is found in the secreted. This Aedes aegypti (Yellowfever mosquito) protein is Vitelline membrane protein 15a-3.